The primary structure comprises 138 residues: uncharacterized protein (138 aa).

Position 35-42 (35-42 (DFIGSFYN)) interacts with ATP.

This is an uncharacterized protein from Acanthamoeba polyphaga mimivirus (APMV).